The sequence spans 86 residues: Putative antitoxin VapB5 (86 aa).

The protein belongs to the phD/YefM antitoxin family. In terms of assembly, forms a complex with VapC5.

In terms of biological role, probable antitoxin component of a probable type II toxin-antitoxin (TA) system. The cognate toxin is VapC5. This Mycobacterium tuberculosis (strain CDC 1551 / Oshkosh) protein is Putative antitoxin VapB5 (vapB5).